The primary structure comprises 92 residues: Small ribosomal subunit protein uS19 (92 aa).

Belongs to the universal ribosomal protein uS19 family.

Functionally, protein S19 forms a complex with S13 that binds strongly to the 16S ribosomal RNA. This is Small ribosomal subunit protein uS19 from Enterococcus faecalis (strain ATCC 700802 / V583).